Reading from the N-terminus, the 96-residue chain is Small ribosomal subunit protein bS6 (96 aa).

The protein belongs to the bacterial ribosomal protein bS6 family.

In terms of biological role, binds together with bS18 to 16S ribosomal RNA. The protein is Small ribosomal subunit protein bS6 of Corynebacterium aurimucosum (strain ATCC 700975 / DSM 44827 / CIP 107346 / CN-1) (Corynebacterium nigricans).